The sequence spans 697 residues: Elongation factor G (697 aa).

Positions 10-285 constitute a tr-type G domain; sequence AKTRNIGIMA…GVIDYLPSPL (276 aa). Residues 19-26, 83-87, and 137-140 each bind GTP; these read AHIDAGKT, DTPGH, and NKMD.

This sequence belongs to the TRAFAC class translation factor GTPase superfamily. Classic translation factor GTPase family. EF-G/EF-2 subfamily.

The protein localises to the cytoplasm. Functionally, catalyzes the GTP-dependent ribosomal translocation step during translation elongation. During this step, the ribosome changes from the pre-translocational (PRE) to the post-translocational (POST) state as the newly formed A-site-bound peptidyl-tRNA and P-site-bound deacylated tRNA move to the P and E sites, respectively. Catalyzes the coordinated movement of the two tRNA molecules, the mRNA and conformational changes in the ribosome. The chain is Elongation factor G from Lactobacillus acidophilus (strain ATCC 700396 / NCK56 / N2 / NCFM).